The sequence spans 163 residues: Retinoic acid receptor responder protein 2 (163 aa).

The signal sequence occupies residues 1-20; sequence MRRLLIPLALWLGAVGVGVA. 3 disulfide bridges follow: cysteine 77–cysteine 87, cysteine 98–cysteine 117, and cysteine 101–cysteine 135. A propeptide spanning residues 158–163 is cleaved from the precursor; the sequence is KALPRS.

Secreted in an inactive precursor form, prochemerin, which is proteolytically processed by a variety of extracellular proteases to generate forms with differing levels of bioactivity. For example, the removal of six amino acids results in chemerin-157, which exhibits the highest activity, while removal of seven amino acids results in chemerin-156 which has slightly less activity. Some proteases are able to cleave at more than one site and chemerin forms may be sequentially processed by different enzymes to modulate activity levels. The coordinated expression and activity of chemerin-modifying enzymes is essential for regulating its bioactivation, inactivation and, consequently, biological function. Cathepsin G cleaves seven C-terminal amino acids from prochemerin (chemerin-156), elastase is able to cleave six (chemerin-157), eight (chemerin-155) or eleven (chemerin-152), plasmin cleaves five amino acids (chemerin-158), and tryptase cleaves five (chemerin-158) or eight (chemerin-155). Multiple cleavages might be required to fully activate chemerin, with an initial tryptase cleavage resulting in chemerin with low activity (chemerin-158), and a second cleavage by carboxypeptidase N or B producing highly active chemerin (chemerin-157).

It is found in the secreted. In terms of biological role, adipocyte-secreted protein (adipokine) that regulates adipogenesis, metabolism and inflammation through activation of the chemokine-like receptor 1 (CMKLR1). Also acts as a ligand for CMKLR2. Can also bind to C-C chemokine receptor-like 2 (CCRL2), but with a lower affinity than it does to CMKLR1 or CMKLR2. Positively regulates adipocyte differentiation, modulates the expression of adipocyte genes involved in lipid and glucose metabolism and might play a role in angiogenesis, a process essential for the expansion of white adipose tissue. Also acts as a pro-inflammatory adipokine, causing an increase in secretion of pro-inflammatory and prodiabetic adipokines, which further impair adipose tissue metabolic function and have negative systemic effects including impaired insulin sensitivity, altered glucose and lipid metabolism, and a decrease in vascular function in other tissues. Can have both pro- and anti-inflammatory properties depending on the modality of enzymatic cleavage by different classes of proteases. Acts as a chemotactic factor for leukocyte populations expressing CMKLR1, particularly immature plasmacytoid dendritic cells, but also immature myeloid DCs, macrophages and natural killer cells. Exerts an anti-inflammatory role by preventing TNF/TNFA-induced VCAM1 expression and monocytes adhesion in vascular endothelial cells. The effect is mediated via inhibiting activation of NF-kappa-B and CRK/p38 through stimulation of AKT1/NOS3 signaling and nitric oxide production. Exhibits an antimicrobial function in the skin. In Pongo abelii (Sumatran orangutan), this protein is Retinoic acid receptor responder protein 2 (RARRES2).